Consider the following 121-residue polypeptide: Large ribosomal subunit protein bL12 (121 aa).

Belongs to the bacterial ribosomal protein bL12 family. As to quaternary structure, homodimer. Part of the ribosomal stalk of the 50S ribosomal subunit. Forms a multimeric L10(L12)X complex, where L10 forms an elongated spine to which 2 to 4 L12 dimers bind in a sequential fashion. Binds GTP-bound translation factors.

Its function is as follows. Forms part of the ribosomal stalk which helps the ribosome interact with GTP-bound translation factors. Is thus essential for accurate translation. This Acinetobacter baylyi (strain ATCC 33305 / BD413 / ADP1) protein is Large ribosomal subunit protein bL12.